The chain runs to 278 residues: GTPase Era (278 aa).

Residues 7–168 (YCGYIAIVGK…ENLIYPYLPN (162 aa)) form the Era-type G domain. The tract at residues 15-22 (GKPNVGKS) is G1. 15 to 22 (GKPNVGKS) contacts GTP. Residues 41–45 (NTTQK) are G2. Residues 62 to 65 (DTPG) form a G3 region. Residues 62–66 (DTPGI) and 117–120 (NKID) contribute to the GTP site. The interval 117–120 (NKID) is G4. The tract at residues 147-149 (ISA) is G5. Positions 199–276 (LRDELPSIIT…YLIIWVKVKI (78 aa)) constitute a KH type-2 domain.

The protein belongs to the TRAFAC class TrmE-Era-EngA-EngB-Septin-like GTPase superfamily. Era GTPase family. As to quaternary structure, monomer.

Its subcellular location is the cytoplasm. It localises to the cell membrane. In terms of biological role, an essential GTPase that binds both GDP and GTP, with rapid nucleotide exchange. Plays a role in 16S rRNA processing and 30S ribosomal subunit biogenesis and possibly also in cell cycle regulation and energy metabolism. In Buchnera aphidicola subsp. Schizaphis graminum (strain Sg), this protein is GTPase Era.